A 171-amino-acid chain; its full sequence is 3-hydroxydecanoyl-[acyl-carrier-protein] dehydratase (171 aa).

H70 is an active-site residue.

The protein belongs to the thioester dehydratase family. FabA subfamily. In terms of assembly, homodimer.

Its subcellular location is the cytoplasm. It catalyses the reaction a (3R)-hydroxyacyl-[ACP] = a (2E)-enoyl-[ACP] + H2O. It carries out the reaction (3R)-hydroxydecanoyl-[ACP] = (2E)-decenoyl-[ACP] + H2O. The catalysed reaction is (2E)-decenoyl-[ACP] = (3Z)-decenoyl-[ACP]. Its pathway is lipid metabolism; fatty acid biosynthesis. In terms of biological role, necessary for the introduction of cis unsaturation into fatty acids. Catalyzes the dehydration of (3R)-3-hydroxydecanoyl-ACP to E-(2)-decenoyl-ACP and then its isomerization to Z-(3)-decenoyl-ACP. Can catalyze the dehydratase reaction for beta-hydroxyacyl-ACPs with saturated chain lengths up to 16:0, being most active on intermediate chain length. The protein is 3-hydroxydecanoyl-[acyl-carrier-protein] dehydratase of Pseudomonas putida (strain GB-1).